Consider the following 211-residue polypeptide: Peroxiredoxin (211 aa).

Residues 2 to 156 enclose the Thioredoxin domain; the sequence is PLIGDKFPEM…IVRMIRAFRV (155 aa). Cysteine 44 acts as the Cysteine sulfenic acid (-SOH) intermediate in catalysis. Arginine 119 lines the substrate pocket. The cysteines at positions 198 and 204 are disulfide-linked.

This sequence belongs to the peroxiredoxin family. Prx6 subfamily. Homodecamer. Pentamer of dimers that assemble into a ring structure.

The protein resides in the cytoplasm. The enzyme catalyses a hydroperoxide + [thioredoxin]-dithiol = an alcohol + [thioredoxin]-disulfide + H2O. In terms of biological role, thiol-specific peroxidase that catalyzes the reduction of hydrogen peroxide and organic hydroperoxides to water and alcohols, respectively. Plays a role in cell protection against oxidative stress by detoxifying peroxides. In Methanothermobacter marburgensis (strain ATCC BAA-927 / DSM 2133 / JCM 14651 / NBRC 100331 / OCM 82 / Marburg) (Methanobacterium thermoautotrophicum), this protein is Peroxiredoxin.